The primary structure comprises 414 residues: MANSC domain-containing protein 1 (414 aa).

The signal sequence occupies residues 1–24; it reads MLFRGTSLAYSLLVISFLTPRSSA. The Extracellular segment spans residues 25–369; sequence GQNCLTKSLE…HGLSFEKWLL (345 aa). One can recognise an MANSC domain in the interval 32-116; sequence SLEDVVIDIQ…LKPAKGLVTY (85 aa). Residues Asn128, Asn234, and Asn335 are each glycosylated (N-linked (GlcNAc...) asparagine). Positions 311–339 are disordered; sequence FQGGSTLTSDPRHGKSSTSESSITNKTAS. The span at 326-338 shows a compositional bias: polar residues; it reads SSTSESSITNKTA. A helical membrane pass occupies residues 370 to 392; it reads IGTLLCGVLFLVIGLVLLGRMLV. The Cytoplasmic portion of the chain corresponds to 393-414; that stretch reads EALRRKRYSRLDYLINGIYVDI.

The protein localises to the membrane. The sequence is that of MANSC domain-containing protein 1 (Mansc1) from Mus musculus (Mouse).